A 163-amino-acid polypeptide reads, in one-letter code: Nucleotide-binding protein Dvul_1191 (163 aa).

The protein belongs to the YajQ family.

Functionally, nucleotide-binding protein. This chain is Nucleotide-binding protein Dvul_1191, found in Nitratidesulfovibrio vulgaris (strain DP4) (Desulfovibrio vulgaris).